A 421-amino-acid polypeptide reads, in one-letter code: Serine--tRNA ligase (421 aa).

An L-serine-binding site is contributed by 229–231; it reads TAE. Residue 260 to 262 coordinates ATP; that stretch reads RAE. E283 contributes to the L-serine binding site. Residue 347-350 coordinates ATP; that stretch reads EISS. Position 383 (S383) interacts with L-serine.

It belongs to the class-II aminoacyl-tRNA synthetase family. Type-1 seryl-tRNA synthetase subfamily. Homodimer. The tRNA molecule binds across the dimer.

Its subcellular location is the cytoplasm. It carries out the reaction tRNA(Ser) + L-serine + ATP = L-seryl-tRNA(Ser) + AMP + diphosphate + H(+). The catalysed reaction is tRNA(Sec) + L-serine + ATP = L-seryl-tRNA(Sec) + AMP + diphosphate + H(+). The protein operates within aminoacyl-tRNA biosynthesis; selenocysteinyl-tRNA(Sec) biosynthesis; L-seryl-tRNA(Sec) from L-serine and tRNA(Sec): step 1/1. Its function is as follows. Catalyzes the attachment of serine to tRNA(Ser). Is also able to aminoacylate tRNA(Sec) with serine, to form the misacylated tRNA L-seryl-tRNA(Sec), which will be further converted into selenocysteinyl-tRNA(Sec). This Desulfitobacterium hafniense (strain Y51) protein is Serine--tRNA ligase.